Reading from the N-terminus, the 851-residue chain is Protein translocase subunit SecA (851 aa).

ATP is bound by residues glutamine 88, 106-110 (GEGKT), and aspartate 496. Zn(2+) is bound by residues cysteine 828, cysteine 830, cysteine 839, and histidine 840.

The protein belongs to the SecA family. Monomer and homodimer. Part of the essential Sec protein translocation apparatus which comprises SecA, SecYEG and auxiliary proteins SecDF-YajC and YidC. The cofactor is Zn(2+).

The protein resides in the cell inner membrane. It is found in the cytoplasm. It carries out the reaction ATP + H2O + cellular proteinSide 1 = ADP + phosphate + cellular proteinSide 2.. Its function is as follows. Part of the Sec protein translocase complex. Interacts with the SecYEG preprotein conducting channel. Has a central role in coupling the hydrolysis of ATP to the transfer of proteins into and across the cell membrane, serving as an ATP-driven molecular motor driving the stepwise translocation of polypeptide chains across the membrane. This Helicobacter hepaticus (strain ATCC 51449 / 3B1) protein is Protein translocase subunit SecA.